We begin with the raw amino-acid sequence, 370 residues long: Polyadenylate-binding protein 4-like (370 aa).

RRM domains follow at residues 10-88, 98-174, 190-267, and 293-369; these read ASLY…WSQR, GNVF…RFKN, TNVY…RAQK, and VKLY…LAQR.

The protein belongs to the polyadenylate-binding protein type-1 family.

May bind RNA. The chain is Polyadenylate-binding protein 4-like (PABPC4L) from Homo sapiens (Human).